A 354-amino-acid polypeptide reads, in one-letter code: Histidinol-phosphate aminotransferase (354 aa).

The segment covering 1 to 11 (MKSFLSDKAKS) has biased composition (basic and acidic residues). A disordered region spans residues 1–33 (MKSFLSDKAKSIEPYTPGEQPKDKNYIKLNTNE). Lysine 211 is modified (N6-(pyridoxal phosphate)lysine).

This sequence belongs to the class-II pyridoxal-phosphate-dependent aminotransferase family. Histidinol-phosphate aminotransferase subfamily. In terms of assembly, homodimer. It depends on pyridoxal 5'-phosphate as a cofactor.

The catalysed reaction is L-histidinol phosphate + 2-oxoglutarate = 3-(imidazol-4-yl)-2-oxopropyl phosphate + L-glutamate. It participates in amino-acid biosynthesis; L-histidine biosynthesis; L-histidine from 5-phospho-alpha-D-ribose 1-diphosphate: step 7/9. The chain is Histidinol-phosphate aminotransferase from Brachyspira hyodysenteriae (strain ATCC 49526 / WA1).